A 263-amino-acid polypeptide reads, in one-letter code: UPF0739 protein C1orf74 homolog (263 aa).

It belongs to the UPF0739 family.

This is UPF0739 protein C1orf74 homolog from Xenopus tropicalis (Western clawed frog).